The primary structure comprises 338 residues: MAHTAAERPPEETLSLWKGEQARLKARVVDRDTEAWQRDPSFSGLQKVGGVDVSFVKGDSVRACASLVVLSYPELKVVYEDSRMVGLKAPYVSGFLAFREVPFLVELVQRLQEKEPDLMPQVVLVDGNGVLHQRGFGVACHLGVLTELPCIGVAKKLLQVDGLENNALHKEKIVLLQAGGDTFPLIGSSGTVLGMALRSHDHSTKPLYVSVGHRISLEVAVRLTHHCCRFRIPEPIRQADIRSREYIRRTLGQLGVAPAQRKDRSQKEQRPNACPQGGPGALADQGRPPECDGRDSSSDRKAPEPGFQEQKDQQLEGTGHQEDSDLWPPSPAWVQSPP.

Asp52 and Asp126 together coordinate Mg(2+). Positions 253–338 (QLGVAPAQRK…PSPAWVQSPP (86 aa)) are disordered. Basic and acidic residues-rich tracts occupy residues 260-270 (QRKDRSQKEQR) and 287-323 (RPPE…HQED). Over residues 328 to 338 (PPSPAWVQSPP) the composition is skewed to pro residues.

It belongs to the endonuclease V family. As to quaternary structure, monomer. Interacts with PABPC1; the interaction is RNA-dependent and stimulates ENDOV activity. The cofactor is Mg(2+). In terms of tissue distribution, highest levels detected in liver with high levels also found in heart, kidney and testis. Expressed at low levels in brain.

Its subcellular location is the cytoplasm. The protein localises to the nucleus. It is found in the nucleolus. The protein resides in the stress granule. Endoribonuclease that specifically cleaves inosine-containing RNAs: cleaves RNA at the second phosphodiester bond 3' to inosine. Active against both single-stranded and double-stranded RNAs. Has strong preference for single-stranded RNAs (ssRNAs) toward double-stranded RNAs (dsRNAs). Cleaves mRNAs and tRNAs containing inosine. Also able to cleave structure-specific dsRNA substrates containing the specific sites 5'-IIUI-3' and 5'-UIUU-3'. Inosine is present in a number of RNAs following editing; the function of inosine-specific endoribonuclease is still unclear: it could either play a regulatory role in edited RNAs, or be involved in antiviral response by removing the hyperedited long viral dsRNA genome that has undergone A-to-I editing. Binds branched DNA structures. This Mus musculus (Mouse) protein is Endonuclease V (Endov).